Consider the following 345-residue polypeptide: uncharacterized protein (345 aa).

This is an uncharacterized protein from Saccharomyces cerevisiae (strain ATCC 204508 / S288c) (Baker's yeast).